The primary structure comprises 220 residues: Cytidylate kinase (220 aa).

Residue 10 to 18 (GPASSGKST) participates in ATP binding.

It belongs to the cytidylate kinase family. Type 1 subfamily.

Its subcellular location is the cytoplasm. It catalyses the reaction CMP + ATP = CDP + ADP. It carries out the reaction dCMP + ATP = dCDP + ADP. The protein is Cytidylate kinase of Lactococcus lactis subsp. cremoris (strain MG1363).